Here is a 346-residue protein sequence, read N- to C-terminus: Zinc transporter YKE4 (346 aa).

The Extracellular segment spans residues 1-2; that stretch reads MK. The chain crosses the membrane as a helical span at residues 3–23; it reads ASHICSYLLSIAPLVVSHGVH. The Cytoplasmic portion of the chain corresponds to 24–69; the sequence is HNRDHGHEANHESKQSFLILKQESIFYSLVCFLQNHLFVLGPRYNA. Residues 70–90 form a helical membrane-spanning segment; it reads IVAILIIQLMPCLFVLFVPGL. The Extracellular portion of the chain corresponds to 91–99; that stretch reads RKNDRASLT. A helical membrane pass occupies residues 100 to 120; the sequence is LSLLVSFSLGTLLGDILLHVI. Over 121–126 the chain is Cytoplasmic; sequence PESLSG. The helical transmembrane segment at 127-147 threads the bilayer; that stretch reads VTDVTMVGGAIFLGFISFLTL. Residues 148–202 lie on the Extracellular side of the membrane; it reads DKTMRILSGTSNDDGSIHSHSHSHTPQQTAEKKAGFNMSAYLNVISGIAHHITDG. N184 carries N-linked (GlcNAc...) asparagine glycosylation. Residues 203–223 form a helical membrane-spanning segment; it reads IALATSFYSSTQVGIMTSIAV. Residues 224–252 lie on the Cytoplasmic side of the membrane; it reads TFHEIPHELGDFAILLSSGFTFPQAIRAQ. Residues 253 to 273 form a helical membrane-spanning segment; that stretch reads AVTAFGAVVGTSIGCWMNEIG. 2 N-linked (GlcNAc...) asparagine glycosylation sites follow: N274 and N285. Residues 274 to 290 lie on the Extracellular side of the membrane; the sequence is NNSHKATSSSANASELM. A helical membrane pass occupies residues 291 to 311; sequence LPFTAGGLIYIATTSVVPQIL. Residues 312-322 are Cytoplasmic-facing; sequence HSSAPDSKLRE. A helical membrane pass occupies residues 323-343; it reads FKKWALQLVFIFVGFAVMALM. The Extracellular segment spans residues 344 to 346; sequence DEH.

Belongs to the ZIP transporter (TC 2.A.5) family. KE4/Catsup subfamily.

It localises to the endoplasmic reticulum membrane. In terms of biological role, zinc transporter whose role depends on the zinc status of the cells. It helps to balance zinc levels between the cytosol and the secretory pathway. It transports zinc into the secretory pathway in a zinc-adequate environment and in a high zinc medium. In high zinc medium, transport of zinc into the secretory pathway is a way to eliminate zinc from the cytosol. Under low cytosolic zinc conditions, it removes zinc from the secretory pathway and acts as a zinc importer that helps to alleviate ER stress. The polypeptide is Zinc transporter YKE4 (YKE4) (Saccharomyces cerevisiae (strain ATCC 204508 / S288c) (Baker's yeast)).